The following is a 753-amino-acid chain: Probable dipeptidyl peptidase 4 (753 aa).

The first 18 residues, 1 to 18 (MKTSQFLSLLLLAGIAQA), serve as a signal peptide directing secretion. N-linked (GlcNAc...) asparagine glycans are attached at residues Asn-84, Asn-114, and Asn-222. Catalysis depends on charge relay system residues Ser-616, Asp-668, and His-703.

The protein belongs to the peptidase S9B family.

The protein localises to the secreted. It carries out the reaction Release of an N-terminal dipeptide, Xaa-Yaa-|-Zaa-, from a polypeptide, preferentially when Yaa is Pro, provided Zaa is neither Pro nor hydroxyproline.. In terms of biological role, extracellular dipeptidyl-peptidase which removes N-terminal dipeptides sequentially from polypeptides having unsubstituted N-termini provided that the penultimate residue is proline. Contributes to pathogenicity. The polypeptide is Probable dipeptidyl peptidase 4 (DPP4) (Trichophyton verrucosum (strain HKI 0517)).